The chain runs to 32 residues: Ranatuerin-2La (32 aa).

An intrachain disulfide couples cysteine 27 to cysteine 32.

Expressed by the skin glands.

The protein localises to the secreted. Its function is as follows. Antibacterial activity against Gram-positive bacterium S.aureus and Gram-negative bacterium E.coli. Weak activity against C.albicans. The chain is Ranatuerin-2La from Rana luteiventris (Columbia spotted frog).